Reading from the N-terminus, the 188-residue chain is Gamma-glutamylcyclotransferase (188 aa).

19 to 24 (YFAYGS) lines the substrate pocket. Glutamate 98 acts as the Proton acceptor in catalysis. Tyrosine 139 lines the substrate pocket. Phosphoserine is present on serine 173.

It belongs to the gamma-glutamylcyclotransferase family. In terms of assembly, homodimer.

It carries out the reaction an alpha-(gamma-L-glutamyl)-L-amino acid = 5-oxo-L-proline + an L-alpha-amino acid. Functionally, catalyzes the formation of 5-oxoproline from gamma-glutamyl dipeptides and may play a significant role in glutathione homeostasis. Induces release of cytochrome c from mitochondria with resultant induction of apoptosis. The sequence is that of Gamma-glutamylcyclotransferase from Homo sapiens (Human).